Reading from the N-terminus, the 509-residue chain is Maturase K (509 aa).

The protein belongs to the intron maturase 2 family. MatK subfamily.

It is found in the plastid. The protein resides in the chloroplast. Usually encoded in the trnK tRNA gene intron. Probably assists in splicing its own and other chloroplast group II introns. This chain is Maturase K, found in Clematis lasiantha (Pipestem clematis).